A 134-amino-acid chain; its full sequence is MLTAVLLSCALLLAMPPLQGAQMGPAPLEGIGRPEEALFLELQGLSLQPSLKRITEEQAEESLLQEAEAKALAEVLDPEGRKPRSPRRCVRLHESCLGHQVPCCDPCATCYCRFFNAFCYCRKLGTTTNPCSRT.

Residues 1 to 20 (MLTAVLLSCALLLAMPPLQG) form the signal peptide. The propeptide occupies 21–84 (AQMGPAPLEG…VLDPEGRKPR (64 aa)). 5 cysteine pairs are disulfide-bonded: cysteine 89/cysteine 104, cysteine 96/cysteine 110, cysteine 103/cysteine 121, cysteine 107/cysteine 131, and cysteine 112/cysteine 119. An Agouti domain is found at 89–131 (CVRLHESCLGHQVPCCDPCATCYCRFFNAFCYCRKLGTTTNPC). Residues 113-115 (RFF) are interaction with melanocortin receptors.

Interacts with melanocortin receptors MC3R, MC4R and MC5R.

The protein localises to the secreted. It localises to the golgi apparatus lumen. In terms of biological role, plays a role in weight homeostasis. Involved in the control of feeding behavior through the central melanocortin system. Acts as alpha melanocyte-stimulating hormone antagonist by inhibiting cAMP production mediated by stimulation of melanocortin receptors within the hypothalamus and adrenal gland. Has very low activity with MC5R. Is an inverse agonist for MC3R and MC4R being able to suppress their constitutive activity. It promotes MC3R and MC4R endocytosis in an arrestin-dependent manner. This Bos taurus (Bovine) protein is Agouti-related protein (AGRP).